A 246-amino-acid chain; its full sequence is MTILFLTMVISYLSCMKATPMKEVSIRGQGSLAYPGLRTQGNLETLSGPNDATRGLTSLADTFEHVIEELLDERQVIQPSKENKDADLYSSRVMLSSQVPLEPPLLFLLEEYKNYLDAANMSMRVRRHSDPARRGELSVCDSTSEWVTAAEKKTAVDMSGATVTVLEKVPVPKGQLKQYFYETKCSTKGYAKEGCRGIDKRYWNSQCRTTQSYVRALTTDNKKRVGWRFIRIDTSCVCTLTIKRGR.

Positions 1–18 (MTILFLTMVISYLSCMKA) are cleaved as a signal peptide. A propeptide spanning residues 19–127 (TPMKEVSIRG…AANMSMRVRR (109 aa)) is cleaved from the precursor. N-linked (GlcNAc...) asparagine glycosylation is present at Asn120. Disulfide bonds link Cys140–Cys207, Cys185–Cys236, and Cys195–Cys238.

This sequence belongs to the NGF-beta family.

Its subcellular location is the secreted. Promotes the survival of neuronal populations that are all located either in the central nervous system or directly connected to it. This Ptyas major (Chinese green snake) protein is Neurotrophic factor BDNF precursor form (BDNF).